A 93-amino-acid chain; its full sequence is MKTLVLLSALVLLAFQVQADPIQNTDEETKTEEQPGEDDQAVSVSFGDPEGSSLQEESLRDLVCYCRKRGCKGRERMNGTCRKGHLLYTMCCR.

A signal peptide spans 1 to 19 (MKTLVLLSALVLLAFQVQA). The propeptide occupies 20-58 (DPIQNTDEETKTEEQPGEDDQAVSVSFGDPEGSSLQEES). Residues 22-56 (IQNTDEETKTEEQPGEDDQAVSVSFGDPEGSSLQE) form a disordered region. 3 cysteine pairs are disulfide-bonded: cysteine 64–cysteine 92, cysteine 66–cysteine 81, and cysteine 71–cysteine 91.

Belongs to the alpha-defensin family. As to expression, paneth cells of the small bowel.

Its subcellular location is the secreted. Probably contributes to the antimicrobial barrier function of the small bowel mucosa. The polypeptide is Alpha-defensin 10 (Defa10) (Mus musculus (Mouse)).